The sequence spans 556 residues: Formate--tetrahydrofolate ligase (556 aa).

Position 65–72 (65–72 (TPAGEGKS)) interacts with ATP.

It belongs to the formate--tetrahydrofolate ligase family.

It carries out the reaction (6S)-5,6,7,8-tetrahydrofolate + formate + ATP = (6R)-10-formyltetrahydrofolate + ADP + phosphate. Its pathway is one-carbon metabolism; tetrahydrofolate interconversion. This Clostridium perfringens (strain ATCC 13124 / DSM 756 / JCM 1290 / NCIMB 6125 / NCTC 8237 / Type A) protein is Formate--tetrahydrofolate ligase.